The primary structure comprises 199 residues: Dephospho-CoA kinase (199 aa).

Residues 3–199 enclose the DPCK domain; sequence TLGVTGGIGS…ELYWAVTGGQ (197 aa). An ATP-binding site is contributed by 11–16; the sequence is GSGKTT.

It belongs to the CoaE family.

The protein localises to the cytoplasm. The catalysed reaction is 3'-dephospho-CoA + ATP = ADP + CoA + H(+). Its pathway is cofactor biosynthesis; coenzyme A biosynthesis; CoA from (R)-pantothenate: step 5/5. Functionally, catalyzes the phosphorylation of the 3'-hydroxyl group of dephosphocoenzyme A to form coenzyme A. In Salinibacter ruber (strain DSM 13855 / M31), this protein is Dephospho-CoA kinase.